We begin with the raw amino-acid sequence, 151 residues long: Phosphopantetheine adenylyltransferase (151 aa).

Ser9 serves as a coordination point for substrate. ATP-binding positions include 9–10 and His17; that span reads SF. The substrate site is built by Lys41, Thr73, and Arg87. ATP is bound by residues 88–90, Glu98, and 122–128; these read GLR and TSFISSS.

This sequence belongs to the bacterial CoaD family. In terms of assembly, homohexamer. The cofactor is Mg(2+).

Its subcellular location is the cytoplasm. The catalysed reaction is (R)-4'-phosphopantetheine + ATP + H(+) = 3'-dephospho-CoA + diphosphate. It participates in cofactor biosynthesis; coenzyme A biosynthesis; CoA from (R)-pantothenate: step 4/5. Functionally, reversibly transfers an adenylyl group from ATP to 4'-phosphopantetheine, yielding dephospho-CoA (dPCoA) and pyrophosphate. This chain is Phosphopantetheine adenylyltransferase, found in Flavobacterium psychrophilum (strain ATCC 49511 / DSM 21280 / CIP 103535 / JIP02/86).